The following is a 594-amino-acid chain: DELLA protein 1 (594 aa).

A disordered region spans residues M1–C36. Low complexity predominate over residues S15–N30. The DELLA motif motif lies at D61 to A65. A GRAS domain is found at V207 to K587. Residues V214–I268 form a leucine repeat I (LRI) region. The required for possible homodimerization stretch occupies residues L216 to M253. Residues M221–E225 carry the LxCxE motif; degenerate motif. The interval H285–G350 is VHIID. The VHIID signature appears at V316–D320. Positions Q364 to N396 are leucine repeat II (LRII). Residues V406–N508 are PFYRE. An LXXLL motif; degenerate motif is present at residues L414–L418. The segment at A511 to K587 is SAW.

The protein belongs to the GRAS family. DELLA subfamily. In terms of assembly, may be a homodimer. Post-translationally, ubiquitinated. Upon GA application it is ubiquitinated, leading to its subsequent degradation. In terms of tissue distribution, strongly expressed in the vascular tissue and endodermis but barely in the inner cortical cells where arbuscule are formed during arbuscular mycorrhizal (AM) symbiosis.

The protein localises to the nucleus. In terms of biological role, probable transcriptional regulator that acts as a repressor of the gibberellin (GA) signaling pathway. Probably acts by participating in large multiprotein complexes that repress transcription of GA-inducible genes. Upon GA application, it is degraded by the proteasome, allowing the GA signaling pathway. Together with DELLA2, required to enable arbuscule development during arbuscular mycorrhizal (AM) symbiosis with AM fungi (e.g. Glomus versiforme) via the regulation of RAM1 which, in turn, regulates various AM genes (e.g. NSP1, NSP2, PT4, LEC5, RAM2, EXO70I, STR and RAD1). The chain is DELLA protein 1 from Medicago truncatula (Barrel medic).